The primary structure comprises 126 residues: MSGMGFVAVGVGAALGAWLRWAFAVLWNAINPALPYGTLAANLLGGYLIGVAVGFFDTHASLPPEWRLLAVTGFLGGLTTFSTFSSEVMANILAGDYAIGMLHVAAHLGGSLFLTMLGLWTVRTLG.

4 consecutive transmembrane segments (helical) span residues phenylalanine 6–leucine 26, tyrosine 36–phenylalanine 56, leucine 68–valine 88, and isoleucine 99–leucine 119. Residues glycine 76 and threonine 79 each coordinate Na(+).

It belongs to the fluoride channel Fluc/FEX (TC 1.A.43) family.

Its subcellular location is the cell inner membrane. It catalyses the reaction fluoride(in) = fluoride(out). With respect to regulation, na(+) is not transported, but it plays an essential structural role and its presence is essential for fluoride channel function. Fluoride-specific ion channel. Important for reducing fluoride concentration in the cell, thus reducing its toxicity. The chain is Fluoride-specific ion channel FluC from Ralstonia nicotianae (strain ATCC BAA-1114 / GMI1000) (Ralstonia solanacearum).